The chain runs to 135 residues: Large ribosomal subunit protein uL16c (135 aa).

The protein belongs to the universal ribosomal protein uL16 family. As to quaternary structure, part of the 50S ribosomal subunit.

It is found in the plastid. Its subcellular location is the chloroplast. This Ranunculus macranthus (Large buttercup) protein is Large ribosomal subunit protein uL16c.